A 119-amino-acid chain; its full sequence is Large ribosomal subunit protein bL20 (119 aa).

The protein belongs to the bacterial ribosomal protein bL20 family.

Its function is as follows. Binds directly to 23S ribosomal RNA and is necessary for the in vitro assembly process of the 50S ribosomal subunit. It is not involved in the protein synthesizing functions of that subunit. This Thiobacillus denitrificans (strain ATCC 25259 / T1) protein is Large ribosomal subunit protein bL20.